Reading from the N-terminus, the 476-residue chain is MASGLEDPILERSFKGHKAAITSADFSPNCKQIATASWDTFLMLWSLKPHARAYRYVGHKDVVTSLQFSPQGNLLASASRDRTVRLWVLDRKGKSSEFKAHTAPVRSVDFSADGQLLVTASEDKSIKVWSMFRQRFLYSLYRHTHWVRCAKFSPDGRLIVSCSEDKTIKIWDTTNKQCVNNFSDSVGFANFVDFNPNGTCIASAGSDHAVKIWDIRMNKLLQHYQVHSCGVNCLSFHPLGNSLVTASSDGTVKMLDLIEGRLIYTLQGHTGPVFTVSFSKDGELLTSGGADAQVLIWRTNFIHLHCKDPKRNLKRLHFEASPHLLDIYPRSPHSHEDRKETIEINPKREVMDLQSSSPPVVDVLSFDSTTMTDSTYRAVPGKGEDICRYFLNPLLMPECSSTTVKKRPEDVSDVPSESLRSVPLAVADALEHIMEQLNILTQTVSILEQRLSLTEDKLRDCLENQQKLFSAVQQKS.

WD repeat units follow at residues 16-55, 58-97, 100-139, 142-181, 183-223, 226-265, and 268-307; these read GHKAAITSADFSPNCKQIATASWDTFLMLWSLKPHARAYR, GHKDVVTSLQFSPQGNLLASASRDRTVRLWVLDRKGKSSE, AHTAPVRSVDFSADGQLLVTASEDKSIKVWSMFRQRFLYS, RHTHWVRCAKFSPDGRLIVSCSEDKTIKIWDTTNKQCVNN, SDSV…LLQH, VHSCGVNCLSFHPLGNSLVTASSDGTVKMLDLIEGRLIYT, and GHTGPVFTVSFSKDGELLTSGGADAQVLIWRTNFIHLHCK. Residues 429–468 adopt a coiled-coil conformation; sequence ALEHIMEQLNILTQTVSILEQRLSLTEDKLRDCLENQQKL.

The protein belongs to the WD repeat POC1 family. As to quaternary structure, interacts with POC1A. Interacts with FAM161A. Interacts with CEP44; the interaction is direct and recruits POC1B to centriolar microtubules. Forms a microtubule-associated complex with POC5, CETN2 and FAM161A. Interacts with CCDC15. In terms of processing, phosphorylated in mitotic cells that may be mediated by CDK1. As to expression, expressed in the retina.

It localises to the cytoplasm. The protein resides in the cytoskeleton. Its subcellular location is the microtubule organizing center. It is found in the centrosome. The protein localises to the centriole. It localises to the cilium basal body. The protein resides in the spindle pole. Plays an important role in centriole assembly and/or stability and ciliogenesis. Involved in early steps of centriole duplication, as well as in the later steps of centriole length control. Acts in concert with POC1A to ensure centriole integrity and proper mitotic spindle formation. Required for primary cilia formation, ciliary length and also cell proliferation. Required for retinal integrity. Acts as a positive regulator of centriole elongation. This Mus musculus (Mouse) protein is POC1 centriolar protein homolog B (Poc1b).